A 98-amino-acid chain; its full sequence is Integration host factor subunit alpha (98 aa).

The protein belongs to the bacterial histone-like protein family. In terms of assembly, heterodimer of an alpha and a beta chain.

In terms of biological role, this protein is one of the two subunits of integration host factor, a specific DNA-binding protein that functions in genetic recombination as well as in transcriptional and translational control. In Glaesserella parasuis serovar 5 (strain SH0165) (Haemophilus parasuis), this protein is Integration host factor subunit alpha.